The following is a 715-amino-acid chain: uncharacterized protein (715 aa).

4 disordered regions span residues alanine 192 to alanine 216, asparagine 300 to arginine 348, alanine 461 to glutamate 481, and phenylalanine 580 to lysine 630. Over residues asparagine 202 to serine 213 the composition is skewed to low complexity. Polar residues-rich tracts occupy residues glutamate 301 to aspartate 326 and histidine 472 to glutamate 481. Positions threonine 601–threonine 614 are enriched in low complexity.

This is an uncharacterized protein from Schizosaccharomyces pombe (strain 972 / ATCC 24843) (Fission yeast).